The sequence spans 337 residues: Lipoyl synthase (337 aa).

[4Fe-4S] cluster-binding residues include Cys81, Cys86, Cys92, Cys107, Cys111, Cys114, and Ser323. The 220-residue stretch at 93-312 (FSHGTATFMI…EEYGNALGFS (220 aa)) folds into the Radical SAM core domain.

This sequence belongs to the radical SAM superfamily. Lipoyl synthase family. It depends on [4Fe-4S] cluster as a cofactor.

It localises to the cytoplasm. It carries out the reaction [[Fe-S] cluster scaffold protein carrying a second [4Fe-4S](2+) cluster] + N(6)-octanoyl-L-lysyl-[protein] + 2 oxidized [2Fe-2S]-[ferredoxin] + 2 S-adenosyl-L-methionine + 4 H(+) = [[Fe-S] cluster scaffold protein] + N(6)-[(R)-dihydrolipoyl]-L-lysyl-[protein] + 4 Fe(3+) + 2 hydrogen sulfide + 2 5'-deoxyadenosine + 2 L-methionine + 2 reduced [2Fe-2S]-[ferredoxin]. It participates in protein modification; protein lipoylation via endogenous pathway; protein N(6)-(lipoyl)lysine from octanoyl-[acyl-carrier-protein]: step 2/2. Catalyzes the radical-mediated insertion of two sulfur atoms into the C-6 and C-8 positions of the octanoyl moiety bound to the lipoyl domains of lipoate-dependent enzymes, thereby converting the octanoylated domains into lipoylated derivatives. The protein is Lipoyl synthase of Xanthomonas oryzae pv. oryzae (strain MAFF 311018).